Consider the following 1029-residue polypeptide: 2-oxoglutarate dehydrogenase, mitochondrial (1029 aa).

Residues arginine 317, aspartate 415, asparagine 448, isoleucine 450, and glutamine 676 each contribute to the thiamine diphosphate site. 3 residues coordinate Mg(2+): aspartate 415, asparagine 448, and isoleucine 450.

This sequence belongs to the alpha-ketoglutarate dehydrogenase family. As to quaternary structure, homodimer. Component of the 2-oxoglutarate dehydrogenase complex. Requires thiamine diphosphate as cofactor. The cofactor is Mg(2+).

The protein resides in the mitochondrion matrix. The enzyme catalyses N(6)-[(R)-lipoyl]-L-lysyl-[protein] + 2-oxoglutarate + H(+) = N(6)-[(R)-S(8)-succinyldihydrolipoyl]-L-lysyl-[protein] + CO2. Functionally, the 2-oxoglutarate dehydrogenase complex catalyzes the overall conversion of 2-oxoglutarate to succinyl-CoA and CO(2). It contains multiple copies of three enzymatic components: 2-oxoglutarate dehydrogenase (E1), dihydrolipoamide succinyltransferase (E2) and lipoamide dehydrogenase (E3). This chain is 2-oxoglutarate dehydrogenase, mitochondrial (ogdh-1), found in Caenorhabditis elegans.